The chain runs to 195 residues: MEEGLLEIMTKDGGDMPAPLEVSTVPAVGDVISGEYNGGMKELMEHLKAQLQALFEDVRAMRGALDEQASHIQVLSDDVCANQRAIVSMCQIMTTAPRQGGLGVVGNKGNFPGARRDPETPSPGIGDSGLLGRDPEDEEDDDEEEKEMPSSATPTSHCELPESPCAGLLGGDGPLVEPLDLPDITLLQLEGEASL.

The stretch at 39 to 68 forms a coiled coil; sequence GMKELMEHLKAQLQALFEDVRAMRGALDEQ. The interval 98-175 is disordered; that stretch reads RQGGLGVVGN…AGLLGGDGPL (78 aa). Residues 135–146 are compositionally biased toward acidic residues; it reads PEDEEDDDEEEK.

The polypeptide is Coiled-coil domain-containing protein 184 (CCDC184) (Bos taurus (Bovine)).